The chain runs to 419 residues: uncharacterized protein (419 aa).

Helical transmembrane passes span 16–36 (IMAK…LVVT), 186–206 (LVYI…SMIA), 235–255 (LLGI…AGSL), 283–303 (VIYA…LAAF), 318–338 (ITPM…GLNA), 340–360 (DAGF…IMFL), and 369–389 (FWQA…LAVI).

To M.jannaschii MJ1024.

Its subcellular location is the cell membrane. This is an uncharacterized protein from Bacillus subtilis (strain 168).